Reading from the N-terminus, the 454-residue chain is Ribosomal protein uS12 methylthiotransferase RimO (454 aa).

The 112-residue stretch at 14–125 folds into the MTTase N-terminal domain; it reads SKVAFSHVGC…IAKVLDRVEK (112 aa). The [4Fe-4S] cluster site is built by Cys23, Cys59, Cys88, Cys163, Cys167, and Cys170. The region spanning 149–378 is the Radical SAM core domain; that stretch reads DKNKFVAYLR…ISVQQNISKD (230 aa). The TRAM domain maps to 381-452; sequence QSYVGSKMKI…EYDLYGETIK (72 aa).

This sequence belongs to the methylthiotransferase family. RimO subfamily. [4Fe-4S] cluster is required as a cofactor.

The protein resides in the cytoplasm. It catalyses the reaction L-aspartate(89)-[ribosomal protein uS12]-hydrogen + (sulfur carrier)-SH + AH2 + 2 S-adenosyl-L-methionine = 3-methylsulfanyl-L-aspartate(89)-[ribosomal protein uS12]-hydrogen + (sulfur carrier)-H + 5'-deoxyadenosine + L-methionine + A + S-adenosyl-L-homocysteine + 2 H(+). Its function is as follows. Catalyzes the methylthiolation of an aspartic acid residue of ribosomal protein uS12. This chain is Ribosomal protein uS12 methylthiotransferase RimO, found in Prochlorococcus marinus (strain MIT 9312).